Here is a 204-residue protein sequence, read N- to C-terminus: Pneumococcal vaccine antigen A (204 aa).

The protein localises to the cell surface. In Streptococcus pneumoniae serotype 4 (strain ATCC BAA-334 / TIGR4), this protein is Pneumococcal vaccine antigen A (pvaA).